We begin with the raw amino-acid sequence, 205 residues long: MFEYVTGYVEYVGPEYVVIDHNGIGYQIFTPNPYVFQRSKQEIRVYTYHYVREDIMALYGFKTREERLLFTKLLGVSGIGPKGALAILASGQTGQVVQAIEHEDEKFLVKFPGVGKKTARQMILDLKGKLADVVPDAFVDLFSDTERFDEKKGSSAELDEALEALRALGYAEREVSRVVPELLKESLTTDQYIKKALSLLLNGKR.

Residues 1–62 are domain I; the sequence is MFEYVTGYVE…EDIMALYGFK (62 aa). The domain II stretch occupies residues 63 to 141; that stretch reads TREERLLFTK…DVVPDAFVDL (79 aa). Residues 142 to 152 form a flexible linker region; it reads FSDTERFDEKK. Residues 153–205 are domain III; the sequence is GSSAELDEALEALRALGYAEREVSRVVPELLKESLTTDQYIKKALSLLLNGKR.

It belongs to the RuvA family. Homotetramer. Forms an RuvA(8)-RuvB(12)-Holliday junction (HJ) complex. HJ DNA is sandwiched between 2 RuvA tetramers; dsDNA enters through RuvA and exits via RuvB. An RuvB hexamer assembles on each DNA strand where it exits the tetramer. Each RuvB hexamer is contacted by two RuvA subunits (via domain III) on 2 adjacent RuvB subunits; this complex drives branch migration. In the full resolvosome a probable DNA-RuvA(4)-RuvB(12)-RuvC(2) complex forms which resolves the HJ.

The protein resides in the cytoplasm. In terms of biological role, the RuvA-RuvB-RuvC complex processes Holliday junction (HJ) DNA during genetic recombination and DNA repair, while the RuvA-RuvB complex plays an important role in the rescue of blocked DNA replication forks via replication fork reversal (RFR). RuvA specifically binds to HJ cruciform DNA, conferring on it an open structure. The RuvB hexamer acts as an ATP-dependent pump, pulling dsDNA into and through the RuvAB complex. HJ branch migration allows RuvC to scan DNA until it finds its consensus sequence, where it cleaves and resolves the cruciform DNA. The chain is Holliday junction branch migration complex subunit RuvA from Bacillus cereus (strain ATCC 14579 / DSM 31 / CCUG 7414 / JCM 2152 / NBRC 15305 / NCIMB 9373 / NCTC 2599 / NRRL B-3711).